A 400-amino-acid chain; its full sequence is Cytohesin-2 (400 aa).

Positions 10–67 (DLTPEERMELENIRRRKQELLVEIQRLREELSEAMSEVEGLEANEGSKTLQRNRKMAM) form a coiled coil. An SEC7 domain is found at 72–201 (FNMDPKKGIQ…VIMLNTSLHN (130 aa)). The PH domain occupies 259 to 376 (NPDREGWLLK…WIKSIQAAVS (118 aa)). A 1,2-diacyl-sn-glycero-3-phospho-(1D-myo-inositol-3,4,5-trisphosphate) contacts are provided by residues 268-276 (KLGGGRVKT), Arg-280, Tyr-291, Arg-301, Lys-339, Asn-350, and His-351. A C-terminal autoinhibitory region region spans residues 387–395 (RKKRISVKK).

In terms of assembly, heteromer. Composed of TAMALIN, CYTH2 and at least one GRM1. Interacts with ARRB1. Interacts with ARL4D; the interaction is direct. Directly interacts with CCDC120 through the coiled coil domain; this interaction stabilizes CCDC120, possibly by preventing its ubiquitination, and is required for neurite growth in a neuroblastoma cell line. Interacts with FRMD4A. Interacts (via N-terminal domain) with INAVA (via N-terminal domain). Present in all tissues tested, with highest protein levels in brain and adrenal.

The protein localises to the cell membrane. It is found in the cytoplasm. Its subcellular location is the cell projection. It localises to the growth cone. The protein resides in the cell junction. The protein localises to the tight junction. It is found in the adherens junction. Acts as a guanine-nucleotide exchange factor (GEF). Promotes guanine-nucleotide exchange on ARF1, ARF3 and ARF6. Activates ARF factors through replacement of GDP with GTP. The cell membrane form, in association with ARL4 proteins, recruits ARF6 to the plasma membrane. Involved in neurite growth. This chain is Cytohesin-2 (Cyth2), found in Mus musculus (Mouse).